Reading from the N-terminus, the 272-residue chain is Glutamate 5-kinase (272 aa).

Lys14 contributes to the ATP binding site. Residues Ser54, Asp141, and Asn157 each contribute to the substrate site. Residues 177 to 178 (SD) and 219 to 225 (TGGMLSK) each bind ATP.

This sequence belongs to the glutamate 5-kinase family.

Its subcellular location is the cytoplasm. It carries out the reaction L-glutamate + ATP = L-glutamyl 5-phosphate + ADP. It participates in amino-acid biosynthesis; L-proline biosynthesis; L-glutamate 5-semialdehyde from L-glutamate: step 1/2. Catalyzes the transfer of a phosphate group to glutamate to form L-glutamate 5-phosphate. The sequence is that of Glutamate 5-kinase from Streptococcus pyogenes serotype M28 (strain MGAS6180).